The chain runs to 368 residues: Ankyrin repeat domain-containing protein 40 (368 aa).

At Met1 the chain carries N-acetylmethionine. ANK repeat units lie at residues 9–38 and 43–72; these read EQQE…DVNS and NGWT…DKEI. 3 disordered regions span residues 93 to 115, 139 to 176, and 196 to 238; these read MGVE…KKES, DSAQ…GTFP, and ILRT…NGTY. Residues 95–107 show a composition bias toward acidic residues; that stretch reads VEEEDDDDDDDDN. Residues 149–169 show a composition bias toward pro residues; it reads STPPASPPADGSPPLLPPGEP. Residues 212 to 224 are compositionally biased toward polar residues; it reads PVSQSRSLFSSVP.

This Homo sapiens (Human) protein is Ankyrin repeat domain-containing protein 40 (ANKRD40).